The primary structure comprises 245 residues: Ribonuclease 3 (245 aa).

An RNase III domain is found at 19–148; it reads FKVFQEKIGI…FIGALYLDQG (130 aa). Position 61 (Glu61) interacts with Mg(2+). Asp65 is a catalytic residue. The Mg(2+) site is built by Asp134 and Glu137. Glu137 is an active-site residue. In terms of domain architecture, DRBM spans 174-243; that stretch reads DYKSQLQELI…AAEALKKLKE (70 aa).

The protein belongs to the ribonuclease III family. In terms of assembly, homodimer. It depends on Mg(2+) as a cofactor.

Its subcellular location is the cytoplasm. It carries out the reaction Endonucleolytic cleavage to 5'-phosphomonoester.. In terms of biological role, digests double-stranded RNA. Involved in the processing of primary rRNA transcript to yield the immediate precursors to the large and small rRNAs (23S and 16S). Processes some mRNAs, and tRNAs when they are encoded in the rRNA operon. Processes pre-crRNA and tracrRNA of type II CRISPR loci if present in the organism. This Bacillus cereus (strain ZK / E33L) protein is Ribonuclease 3.